Consider the following 393-residue polypeptide: uncharacterized protein (393 aa).

Residues 2 to 266 (AMIGLVGKPN…AEKAGIIKRK (265 aa)) form the OBG-type G domain. GTP-binding positions include 8–15 (GKPNVGKS) and 78–82 (DVAGL). The 77-residue stretch at 314–390 (DMIVVYPVED…KHNDIIKIVS (77 aa)) folds into the TGS domain.

Belongs to the TRAFAC class OBG-HflX-like GTPase superfamily. OBG GTPase family.

This is an uncharacterized protein from Methanocaldococcus jannaschii (strain ATCC 43067 / DSM 2661 / JAL-1 / JCM 10045 / NBRC 100440) (Methanococcus jannaschii).